A 428-amino-acid polypeptide reads, in one-letter code: Enolase 1 (428 aa).

(2R)-2-phosphoglycerate is bound at residue Q167. E209 functions as the Proton donor in the catalytic mechanism. Mg(2+) is bound by residues D246, E288, and D315. Residues K340, R369, S370, and K391 each coordinate (2R)-2-phosphoglycerate. K340 (proton acceptor) is an active-site residue.

The protein belongs to the enolase family. As to quaternary structure, component of the RNA degradosome, a multiprotein complex involved in RNA processing and mRNA degradation. It depends on Mg(2+) as a cofactor.

It localises to the cytoplasm. It is found in the secreted. Its subcellular location is the cell surface. The catalysed reaction is (2R)-2-phosphoglycerate = phosphoenolpyruvate + H2O. Its pathway is carbohydrate degradation; glycolysis; pyruvate from D-glyceraldehyde 3-phosphate: step 4/5. In terms of biological role, catalyzes the reversible conversion of 2-phosphoglycerate (2-PG) into phosphoenolpyruvate (PEP). It is essential for the degradation of carbohydrates via glycolysis. This Pseudomonas syringae pv. syringae (strain B728a) protein is Enolase 1.